The primary structure comprises 317 residues: tRNA-dihydrouridine(20a/20b) synthase [NAD(P)+]-like (317 aa).

FMN-binding positions include 33–35 (PMV) and Q87. The Proton donor role is filled by C116. FMN is bound by residues K158, H186, 216-218 (NGD), and 240-241 (AR).

The protein belongs to the Dus family. Dus4 subfamily. It depends on FMN as a cofactor.

The catalysed reaction is 5,6-dihydrouridine(20a) in tRNA + NADP(+) = uridine(20a) in tRNA + NADPH + H(+). The enzyme catalyses 5,6-dihydrouridine(20a) in tRNA + NAD(+) = uridine(20a) in tRNA + NADH + H(+). It catalyses the reaction 5,6-dihydrouridine(20b) in tRNA + NAD(+) = uridine(20b) in tRNA + NADH + H(+). It carries out the reaction 5,6-dihydrouridine(20b) in tRNA + NADP(+) = uridine(20b) in tRNA + NADPH + H(+). Its function is as follows. Catalyzes the synthesis of dihydrouridine, a modified base found in the D-loop of most tRNAs. The chain is tRNA-dihydrouridine(20a/20b) synthase [NAD(P)+]-like (DUS4L) from Homo sapiens (Human).